The chain runs to 291 residues: MTKECQDLQHLDNEESDHHQLRKGPPPSQPLLQRLCSGPRLLLLSLGLSLLLLVVVCVIGSQNSQLQKELRGLRETFSNFTASTEAQVKGLSTQGGNVGRKMKSLESQLEKQQKDLSEDHSSLLLHVKQFVSDLRSLSCQMAALQGNGSERACCPVNWVEHERSCYWFSRSGKAWADADNYCRLEDAHLVVVTSWEEQKFVQHHTGPVNTWMGLHDQNGPWKWVDGTDYETGFKNWRPEQPDDWYGHGLGGGEDCAHFTDDGRWNDDVCQRPYRWVCETELDKASQEPPLL.

Basic and acidic residues predominate over residues 1–19; the sequence is MTKECQDLQHLDNEESDHH. A disordered region spans residues 1–27; that stretch reads MTKECQDLQHLDNEESDHHQLRKGPPP. Over 1 to 40 the chain is Cytoplasmic; it reads MTKECQDLQHLDNEESDHHQLRKGPPPSQPLLQRLCSGPR. The short motif at 5 to 8 is the Endocytosis signal element; that stretch reads CQDL. S16 is subject to Phosphoserine. C36 is lipidated: S-palmitoyl cysteine. The chain crosses the membrane as a helical; Signal-anchor for type II membrane protein span at residues 41 to 61; it reads LLLLSLGLSLLLLVVVCVIGS. Residues 61 to 123 are a coiled coil; it reads SQNSQLQKEL…KDLSEDHSSL (63 aa). At 62–291 the chain is on the extracellular side; the sequence is QNSQLQKELR…DKASQEPPLL (230 aa). N79 and N147 each carry an N-linked (GlcNAc...) asparagine glycan. Intrachain disulfides connect C154–C165, C182–C277, and C255–C269. The C-type lectin domain maps to 161–278; sequence HERSCYWFSR…CQRPYRWVCE (118 aa). Residues V191, E197, D216, Q240, D242, D243, E253, D254, N265, D266, and E278 each coordinate Ca(2+). Position 285 is a phosphoserine (S285).

As to quaternary structure, interacts with LASS2. Phosphorylated on a cytoplasmic Ser residue.

The protein resides in the membrane. Functionally, mediates the endocytosis of plasma glycoproteins to which the terminal sialic acid residue on their complex carbohydrate moieties has been removed. The receptor recognizes terminal galactose and N-acetylgalactosamine units. After ligand binding to the receptor, the resulting complex is internalized and transported to a sorting organelle, where receptor and ligand are disassociated. The receptor then returns to the cell membrane surface. This chain is Asialoglycoprotein receptor 1 (ASGR1), found in Pongo abelii (Sumatran orangutan).